A 510-amino-acid chain; its full sequence is MQLRSSEISELIKYRISKFNAESEMQDEGIIISISDGIIKIYGLNNIMQNEMIKLPEKTFAIALNLEKEIVGAVVMGSYFHLSEGMKVYSTGRILEVPTGNNLLGRVLNALGEPLDSKGDILHDCFSPIETIAPGVIDRLSINEPLQTGYKSIDSMVPIGKGQRELIIGDRQTGKSSLAIDTIINQKDSNIKCIYVSIGQKFSTVVKTVEKLKEHDALSNTIIVCATASDSAVLQYLAPYSGCTMGEYFRDRGEDSLIVYDDLSKQAIAYRQISLLLRRPPGREAYPGDIFYLHSRLLERSARVNEIYVENFTKGKVKNKSGSLTALPIVETQGGDISSFVPTNLISITDGQIFLESNLFNSGIRPAINPGISVSRVGGSAQTEIIRKLSGNIRTSLAQYNELSSFAQFSSDLDDSTKKQLQHGEKIIEILKQKQYSPMSLSKQALLLFAVQNKYLDKIKSSEVEKYENSLLKHAEKKYSNYMEKINKSYIYDDFVIKKLKKIMDSFEFF.

169 to 176 (GDRQTGKS) provides a ligand contact to ATP.

The protein belongs to the ATPase alpha/beta chains family. In terms of assembly, F-type ATPases have 2 components, CF(1) - the catalytic core - and CF(0) - the membrane proton channel. CF(1) has five subunits: alpha(3), beta(3), gamma(1), delta(1), epsilon(1). CF(0) has three main subunits: a(1), b(2) and c(9-12). The alpha and beta chains form an alternating ring which encloses part of the gamma chain. CF(1) is attached to CF(0) by a central stalk formed by the gamma and epsilon chains, while a peripheral stalk is formed by the delta and b chains.

The protein resides in the cell membrane. The catalysed reaction is ATP + H2O + 4 H(+)(in) = ADP + phosphate + 5 H(+)(out). Its function is as follows. Produces ATP from ADP in the presence of a proton gradient across the membrane. The alpha chain is a regulatory subunit. The sequence is that of ATP synthase subunit alpha from Wigglesworthia glossinidia brevipalpis.